Consider the following 120-residue polypeptide: NAD(P)H-quinone oxidoreductase subunit 3 (120 aa).

Helical transmembrane passes span 6–26 (GYDA…LALV), 64–84 (MFAL…PWAV), and 89–109 (LGLL…VALA).

This sequence belongs to the complex I subunit 3 family. In terms of assembly, NDH-1 can be composed of about 15 different subunits; different subcomplexes with different compositions have been identified which probably have different functions.

The protein resides in the cellular thylakoid membrane. The catalysed reaction is a plastoquinone + NADH + (n+1) H(+)(in) = a plastoquinol + NAD(+) + n H(+)(out). It catalyses the reaction a plastoquinone + NADPH + (n+1) H(+)(in) = a plastoquinol + NADP(+) + n H(+)(out). Functionally, NDH-1 shuttles electrons from an unknown electron donor, via FMN and iron-sulfur (Fe-S) centers, to quinones in the respiratory and/or the photosynthetic chain. The immediate electron acceptor for the enzyme in this species is believed to be plastoquinone. Couples the redox reaction to proton translocation, and thus conserves the redox energy in a proton gradient. Cyanobacterial NDH-1 also plays a role in inorganic carbon-concentration. In Prochlorococcus marinus (strain SARG / CCMP1375 / SS120), this protein is NAD(P)H-quinone oxidoreductase subunit 3.